The chain runs to 301 residues: HPr kinase/phosphorylase (301 aa).

Active-site residues include H134 and K155. ATP is bound at residue 149-156; that stretch reads GKSGLGKS. A Mg(2+)-binding site is contributed by S156. The active-site Proton acceptor; for phosphorylation activity. Proton donor; for dephosphorylation activity is the D173. Residues 196–205 form an important for the catalytic mechanism of both phosphorylation and dephosphorylation region; the sequence is LEVRGLGIIN. Mg(2+) is bound at residue E197. The active site involves R239. The interval 260-265 is important for the catalytic mechanism of dephosphorylation; that stretch reads PITPGK.

It belongs to the HPrK/P family. As to quaternary structure, homohexamer. The cofactor is Mg(2+).

It catalyses the reaction [HPr protein]-L-serine + ATP = [HPr protein]-O-phospho-L-serine + ADP + H(+). The catalysed reaction is [HPr protein]-O-phospho-L-serine + phosphate + H(+) = [HPr protein]-L-serine + diphosphate. Functionally, catalyzes the ATP- as well as the pyrophosphate-dependent phosphorylation of a specific serine residue in HPr, a phosphocarrier protein of the phosphoenolpyruvate-dependent sugar phosphotransferase system (PTS). HprK/P also catalyzes the pyrophosphate-producing, inorganic phosphate-dependent dephosphorylation (phosphorolysis) of seryl-phosphorylated HPr (P-Ser-HPr). The two antagonistic activities of HprK/P are regulated by several intracellular metabolites, which change their concentration in response to the absence or presence of rapidly metabolisable carbon sources (glucose, fructose, etc.) in the growth medium. Therefore, by controlling the phosphorylation state of HPr, HPrK/P is a sensor enzyme that plays a major role in the regulation of carbon metabolism and sugar transport: it mediates carbon catabolite repression (CCR), and regulates PTS-catalyzed carbohydrate uptake and inducer exclusion. This chain is HPr kinase/phosphorylase, found in Malacoplasma penetrans (strain HF-2) (Mycoplasma penetrans).